The sequence spans 236 residues: uncharacterized protein (236 aa).

Over residues 1–12 (MKLLGHRKSHGH) the composition is skewed to basic residues. Residues 1 to 108 (MKLLGHRKSH…KAANRARMTE (108 aa)) are disordered. The span at 13–31 (QRADASPDAGSKDGCRPDS) shows a compositional bias: basic and acidic residues. Over residues 32–47 (GRTSGSDTSRGSQTTG) the composition is skewed to low complexity. A compositionally biased stretch (basic residues) spans 52–65 (PTPKRNQSRRHTKK). Residues 67 to 78 (PVAPAPMTAAQA) show a composition bias toward low complexity. Over residues 90-108 (LSREERRAEKAANRARMTE) the composition is skewed to basic and acidic residues. The next 2 membrane-spanning stretches (helical) occupy residues 142 to 162 (NLLGLFMPSALTLLFVMFAVP) and 166 to 186 (FYLSPAMLILLALMTIDAIIL).

Its subcellular location is the cell membrane. This is an uncharacterized protein from Mycobacterium tuberculosis (strain CDC 1551 / Oshkosh).